The primary structure comprises 630 residues: 1-deoxy-D-xylulose-5-phosphate synthase (630 aa).

Thiamine diphosphate is bound by residues His-72 and 113–115 (GHS). Position 144 (Asp-144) interacts with Mg(2+). Thiamine diphosphate contacts are provided by residues 145-146 (GA), Asn-173, Tyr-284, and Glu-367. A Mg(2+)-binding site is contributed by Asn-173.

This sequence belongs to the transketolase family. DXPS subfamily. In terms of assembly, homodimer. Requires Mg(2+) as cofactor. Thiamine diphosphate is required as a cofactor.

It carries out the reaction D-glyceraldehyde 3-phosphate + pyruvate + H(+) = 1-deoxy-D-xylulose 5-phosphate + CO2. Its pathway is metabolic intermediate biosynthesis; 1-deoxy-D-xylulose 5-phosphate biosynthesis; 1-deoxy-D-xylulose 5-phosphate from D-glyceraldehyde 3-phosphate and pyruvate: step 1/1. Its function is as follows. Catalyzes the acyloin condensation reaction between C atoms 2 and 3 of pyruvate and glyceraldehyde 3-phosphate to yield 1-deoxy-D-xylulose-5-phosphate (DXP). The protein is 1-deoxy-D-xylulose-5-phosphate synthase of Bacillus cereus (strain AH820).